Reading from the N-terminus, the 189-residue chain is Xanthine phosphoribosyltransferase (189 aa).

Xanthine is bound by residues Leu-20 and Asn-27. 5-phospho-alpha-D-ribose 1-diphosphate is bound at residue 128-132 (ANGEA). Lys-156 serves as a coordination point for xanthine.

This sequence belongs to the purine/pyrimidine phosphoribosyltransferase family. Xpt subfamily. As to quaternary structure, homodimer.

It is found in the cytoplasm. It catalyses the reaction XMP + diphosphate = xanthine + 5-phospho-alpha-D-ribose 1-diphosphate. The protein operates within purine metabolism; XMP biosynthesis via salvage pathway; XMP from xanthine: step 1/1. Functionally, converts the preformed base xanthine, a product of nucleic acid breakdown, to xanthosine 5'-monophosphate (XMP), so it can be reused for RNA or DNA synthesis. The protein is Xanthine phosphoribosyltransferase of Clostridium acetobutylicum (strain ATCC 824 / DSM 792 / JCM 1419 / IAM 19013 / LMG 5710 / NBRC 13948 / NRRL B-527 / VKM B-1787 / 2291 / W).